Reading from the N-terminus, the 101-residue chain is Acylphosphatase (101 aa).

Residues 15–101 enclose the Acylphosphatase-like domain; sequence RMYARVYGLV…KGEFEDFETY (87 aa). Residues Arg-30 and Asn-48 contribute to the active site.

It belongs to the acylphosphatase family.

It catalyses the reaction an acyl phosphate + H2O = a carboxylate + phosphate + H(+). The polypeptide is Acylphosphatase (acyP) (Saccharolobus solfataricus (strain ATCC 35092 / DSM 1617 / JCM 11322 / P2) (Sulfolobus solfataricus)).